The primary structure comprises 413 residues: Argininosuccinate synthase (413 aa).

ATP-binding positions include Ala-14–Ser-22 and Ala-41. The L-citrulline site is built by Tyr-94 and Ser-99. Gly-124 is an ATP binding site. Positions 126, 130, and 131 each coordinate L-aspartate. Residue Asn-130 participates in L-citrulline binding. Residues Arg-134, Ser-185, Ser-194, Glu-270, and Tyr-282 each coordinate L-citrulline.

This sequence belongs to the argininosuccinate synthase family. Type 1 subfamily. As to quaternary structure, homotetramer.

The protein localises to the cytoplasm. The catalysed reaction is L-citrulline + L-aspartate + ATP = 2-(N(omega)-L-arginino)succinate + AMP + diphosphate + H(+). It functions in the pathway amino-acid biosynthesis; L-arginine biosynthesis; L-arginine from L-ornithine and carbamoyl phosphate: step 2/3. In Hyphomonas neptunium (strain ATCC 15444), this protein is Argininosuccinate synthase.